Consider the following 309-residue polypeptide: Cytidine deaminase (309 aa).

CMP/dCMP-type deaminase domains follow at residues 48–168 (DEDA…FGPR) and 200–309 (DDND…SLSL). 89–91 (NME) lines the substrate pocket. His102 lines the Zn(2+) pocket. The active-site Proton donor is the Glu104. 2 residues coordinate Zn(2+): Cys129 and Cys132.

It belongs to the cytidine and deoxycytidylate deaminase family. In terms of assembly, homodimer. The cofactor is Zn(2+).

It catalyses the reaction cytidine + H2O + H(+) = uridine + NH4(+). The enzyme catalyses 2'-deoxycytidine + H2O + H(+) = 2'-deoxyuridine + NH4(+). In terms of biological role, this enzyme scavenges exogenous and endogenous cytidine and 2'-deoxycytidine for UMP synthesis. The sequence is that of Cytidine deaminase from Sodalis glossinidius (strain morsitans).